Consider the following 135-residue polypeptide: Small ribosomal subunit protein uS12 (135 aa).

At Asp89 the chain carries 3-methylthioaspartic acid. Residues 101-135 are disordered; it reads SLDTSGVADRKQSRSKYGAKQPKAGAAAPAKGKGR. The span at 118 to 135 shows a compositional bias: low complexity; it reads GAKQPKAGAAAPAKGKGR.

This sequence belongs to the universal ribosomal protein uS12 family. Part of the 30S ribosomal subunit. Contacts proteins S8 and S17. May interact with IF1 in the 30S initiation complex.

In terms of biological role, with S4 and S5 plays an important role in translational accuracy. Interacts with and stabilizes bases of the 16S rRNA that are involved in tRNA selection in the A site and with the mRNA backbone. Located at the interface of the 30S and 50S subunits, it traverses the body of the 30S subunit contacting proteins on the other side and probably holding the rRNA structure together. The combined cluster of proteins S8, S12 and S17 appears to hold together the shoulder and platform of the 30S subunit. The polypeptide is Small ribosomal subunit protein uS12 (Chlorobium limicola (strain DSM 245 / NBRC 103803 / 6330)).